A 35-amino-acid chain; its full sequence is Photosystem II reaction center protein T (35 aa).

A helical transmembrane segment spans residues 3–23; the sequence is ALVYTFLLVSTLGILFFAIFF.

This sequence belongs to the PsbT family. As to quaternary structure, PSII is composed of 1 copy each of membrane proteins PsbA, PsbB, PsbC, PsbD, PsbE, PsbF, PsbH, PsbI, PsbJ, PsbK, PsbL, PsbM, PsbT, PsbY, PsbZ, Psb30/Ycf12, at least 3 peripheral proteins of the oxygen-evolving complex and a large number of cofactors. It forms dimeric complexes.

The protein localises to the plastid. It localises to the chloroplast thylakoid membrane. Functionally, found at the monomer-monomer interface of the photosystem II (PS II) dimer, plays a role in assembly and dimerization of PSII. PSII is a light-driven water plastoquinone oxidoreductase, using light energy to abstract electrons from H(2)O, generating a proton gradient subsequently used for ATP formation. This chain is Photosystem II reaction center protein T, found in Gnetum gnemon (Spanish joint-fir).